The primary structure comprises 66 residues: Large ribosomal subunit protein uL29 (66 aa).

This sequence belongs to the universal ribosomal protein uL29 family.

The protein is Large ribosomal subunit protein uL29 of Nitrosococcus oceani (strain ATCC 19707 / BCRC 17464 / JCM 30415 / NCIMB 11848 / C-107).